We begin with the raw amino-acid sequence, 37 residues long: MTAESMMFNGAVLLMVLVLVGLAWGFLLLKIQGGEAE.

A helical membrane pass occupies residues 11–29 (AVLLMVLVLVGLAWGFLLL).

It belongs to the PetM family. As to quaternary structure, the 4 large subunits of the cytochrome b6-f complex are cytochrome b6, subunit IV (17 kDa polypeptide, PetD), cytochrome f and the Rieske protein, while the 4 small subunits are PetG, PetL, PetM and PetN. The complex functions as a dimer.

Its subcellular location is the cellular thylakoid membrane. Its function is as follows. Component of the cytochrome b6-f complex, which mediates electron transfer between photosystem II (PSII) and photosystem I (PSI), cyclic electron flow around PSI, and state transitions. In Rippkaea orientalis (strain PCC 8801 / RF-1) (Cyanothece sp. (strain PCC 8801)), this protein is Cytochrome b6-f complex subunit 7.